A 344-amino-acid polypeptide reads, in one-letter code: DNA-directed RNA polymerase subunit alpha (344 aa).

The tract at residues Met1–Glu232 is alpha N-terminal domain (alpha-NTD). The segment at Leu270–Lys344 is alpha C-terminal domain (alpha-CTD).

The protein belongs to the RNA polymerase alpha chain family. In plastids the minimal PEP RNA polymerase catalytic core is composed of four subunits: alpha, beta, beta', and beta''. When a (nuclear-encoded) sigma factor is associated with the core the holoenzyme is formed, which can initiate transcription.

Its subcellular location is the plastid. The protein resides in the chloroplast. It carries out the reaction RNA(n) + a ribonucleoside 5'-triphosphate = RNA(n+1) + diphosphate. In terms of biological role, DNA-dependent RNA polymerase catalyzes the transcription of DNA into RNA using the four ribonucleoside triphosphates as substrates. The sequence is that of DNA-directed RNA polymerase subunit alpha from Spirogyra maxima (Green alga).